The following is a 1421-amino-acid chain: ALK tyrosine kinase receptor homolog scd-2 (1421 aa).

A signal peptide spans 1 to 20 (MRKRRLWWFVVLFRVTLVGA). Residues 21 to 903 (ILPNETFDVR…DTCEEIQIWT (883 aa)) are Extracellular-facing. N-linked (GlcNAc...) asparagine glycans are attached at residues asparagine 24, asparagine 44, asparagine 70, asparagine 83, asparagine 119, and asparagine 201. The 39-residue stretch at 300–338 (QCSRGDQFLCSISANTRCLQNAQCDSRIDCDDESDEMDC) folds into the LDL-receptor class A domain. 3 disulfide bridges follow: cysteine 301–cysteine 317, cysteine 309–cysteine 329, and cysteine 323–cysteine 338. The 204-residue stretch at 339 to 542 (GNINGTMCDF…NLSFSPTCFE (204 aa)) folds into the MAM domain. Residues asparagine 342, asparagine 362, asparagine 495, asparagine 533, asparagine 546, asparagine 633, asparagine 726, asparagine 793, asparagine 849, asparagine 873, and asparagine 893 are each glycosylated (N-linked (GlcNAc...) asparagine). A helical membrane pass occupies residues 904 to 924 (LYNITFLIFAALTIIGALFVV). Topologically, residues 925-1421 (YHYRNREKQM…SVPLLECQTR (497 aa)) are cytoplasmic. The Protein kinase domain maps to 976–1261 (IERGRVLGRG…GMPFPIHPAV (286 aa)). Residues 982 to 990 (LGRGNFGEV) and lysine 1003 each bind ATP. Aspartate 1106 functions as the Proton acceptor in the catalytic mechanism.

It belongs to the protein kinase superfamily. Tyr protein kinase family. Insulin receptor subfamily. As to quaternary structure, interacts (via cytoplasmic domain) with fsn-1 (via SPRY domain). As to expression, expressed in AIA sensory neurons.

It is found in the cell membrane. The enzyme catalyses L-tyrosyl-[protein] + ATP = O-phospho-L-tyrosyl-[protein] + ADP + H(+). Probable tyrosine-protein kinase receptor which regulates the dauer/non-dauer developmental decision probably by controlling daf-3 transcriptional activity in parallel or together with the TGF-beta pathway. Regulates integration of conflicting sensory cues in AIA interneurons. May act as a receptor for hen-1. In AWA neurons, together with hen-1, plays a role in regulating olfactory adaptation by controlling the forgetting sensory responses to odorants such as diacetyl. This Caenorhabditis elegans protein is ALK tyrosine kinase receptor homolog scd-2.